The following is a 283-amino-acid chain: Elongation factor Ts (283 aa).

The involved in Mg(2+) ion dislocation from EF-Tu stretch occupies residues 82-85 (TDFV).

This sequence belongs to the EF-Ts family.

The protein resides in the cytoplasm. Associates with the EF-Tu.GDP complex and induces the exchange of GDP to GTP. It remains bound to the aminoacyl-tRNA.EF-Tu.GTP complex up to the GTP hydrolysis stage on the ribosome. This Photorhabdus laumondii subsp. laumondii (strain DSM 15139 / CIP 105565 / TT01) (Photorhabdus luminescens subsp. laumondii) protein is Elongation factor Ts.